The sequence spans 121 residues: Prefoldin subunit beta (121 aa).

This sequence belongs to the prefoldin subunit beta family. Heterohexamer of two alpha and four beta subunits.

Its subcellular location is the cytoplasm. Molecular chaperone capable of stabilizing a range of proteins. Seems to fulfill an ATP-independent, HSP70-like function in archaeal de novo protein folding. The sequence is that of Prefoldin subunit beta from Caldivirga maquilingensis (strain ATCC 700844 / DSM 13496 / JCM 10307 / IC-167).